Here is a 908-residue protein sequence, read N- to C-terminus: MARGFQGVMLRGLGARDHQATVVDKEYIAPHFVRVRLVSPTLFDEVIVEPTSWLRFWFPDPDGSDTEFQRAYTITESDPETGRFAVDMVLHEPAGPASTWARTVEPGATIAVMSMGSRGFSVPEDPEDRPVGYLLIGDSASTPAINGIIEVVPHDIPIELYLEQHHDDDVLIPLAEHPRLRVHRVSRDDASSLAAALELRDWSNWYCWAGPEAGALKQVRTRLRDEFGFPKREVYAQAYWTEGRAMGSSRGETSTPAKPAAKTAPAKAAAKPAAASGAGTPEHAAAPAAATTGAPQAAPAPGAAQPRTPVRGRWRAEAGSRLLAPLKKPLIVSGVLQALITLIELAPFVLLVELARLLLGGAEAERLWTLGLTAVSLIGLGAVLAAAMTLWLHRVDARFAHELRGRLLTKLSRLPLGWFTRRGSASTKQLVQDDTLALHYLITHAIPDAVAAVVAPVAVLVYLFVADWRVALVLFIPVLVYLVLMSVMTIQSGSKIAQAPRWAERMGGEAGAFLEGQPVIRIFGGAAASRFRRRLDDYIDFLVSWQRPFVGKKTLMDLVTRPATFLWIILVAGVPLVVTGRMDPVNLLPFLLLGTTFGARLLGIGYGLSGIQTGMLAARRIQTVLDEPELVVRDRTGQAGTDHASGDQARPGTVELDRVSFEYRPGVPVIRDVTLTLRPGTVTALVGPSGSGKSTLAALVARFHDVTQGAIRVDGRDIRTLTADELYRRVGFVLQDAQLVHGSVAENIALAEPDAGLERIRTAARDAQIHDRITRMPDGYDSVLGAGSALSGGERQRVTIARAILADTPVLVLDEATAFADPESEYLVQQAINRLTRDRTVLVIAHRLHTITHADQIVVLDDGRIVEVGTHDELLAAGGRYRGLWDSGRYSSPDAGRPVSADAVEVGR.

At 1-329 the chain is on the cytoplasmic side; sequence MARGFQGVML…SRLLAPLKKP (329 aa). The FAD-binding FR-type domain maps to 15-124; that stretch reads ARDHQATVVD…MGSRGFSVPE (110 aa). Residues 16-245 are siderophore interaction domain; the sequence is RDHQATVVDK…AQAYWTEGRA (230 aa). FAD is bound by residues 70–73, 87–91, 97–98, and 241–243; these read RAYT, DMVLH, AS, and TEG. The tract at residues 245–311 is disordered; sequence AMGSSRGETS…GAAQPRTPVR (67 aa). Low complexity predominate over residues 253 to 309; that stretch reads TSTPAKPAAKTAPAKAAAKPAAASGAGTPEHAAAPAAATTGAPQAAPAPGAAQPRTP. The chain crosses the membrane as a helical span at residues 330 to 350; the sequence is LIVSGVLQALITLIELAPFVL. The region spanning 331–613 is the ABC transmembrane type-1 domain; that stretch reads IVSGVLQALI…IGYGLSGIQT (283 aa). Topologically, residues 351-371 are periplasmic; sequence LVELARLLLGGAEAERLWTLG. The helical transmembrane segment at 372–392 threads the bilayer; the sequence is LTAVSLIGLGAVLAAAMTLWL. The Cytoplasmic segment spans residues 393–444; that stretch reads HRVDARFAHELRGRLLTKLSRLPLGWFTRRGSASTKQLVQDDTLALHYLITH. The helical transmembrane segment at 445 to 465 threads the bilayer; that stretch reads AIPDAVAAVVAPVAVLVYLFV. Over 466 to 469 the chain is Periplasmic; that stretch reads ADWR. The helical transmembrane segment at 470–490 threads the bilayer; sequence VALVLFIPVLVYLVLMSVMTI. The Cytoplasmic portion of the chain corresponds to 491–557; that stretch reads QSGSKIAQAP…PFVGKKTLMD (67 aa). The helical transmembrane segment at 558–578 threads the bilayer; the sequence is LVTRPATFLWIILVAGVPLVV. Over 579 to 586 the chain is Periplasmic; sequence TGRMDPVN. Residues 587–607 form a helical membrane-spanning segment; that stretch reads LLPFLLLGTTFGARLLGIGYG. Residues 608–908 lie on the Cytoplasmic side of the membrane; that stretch reads LSGIQTGMLA…VSADAVEVGR (301 aa). One can recognise an ABC transporter domain in the interval 654 to 887; it reads VELDRVSFEY…GGRYRGLWDS (234 aa). 687–694 contacts ATP; it reads GPSGSGKS.

Belongs to the ABC transporter superfamily. Siderophore-Fe(3+) uptake transporter (SIUT) (TC 3.A.1.21) family. In terms of assembly, forms a heterodimer with IrtB. It depends on FAD as a cofactor.

Its subcellular location is the cell inner membrane. Its activity is regulated as follows. The ATPase activity of IrtAB is stimulated more than 38-fold in the presence of Fe-MBT, and more than 10-fold in the presence of Fe-cMBT. In terms of biological role, part of the ABC transporter complex IrtAB involved in the import of iron-bound mycobactin (Fe-MBT) and carboxymycobactin (Fe-cMBT). Has a preference for Fe-MBT over Fe-cMBT. Mycobactins are then reduced by the siderophore interaction domain to facilitate iron release in the bacterial cell. Transmembrane domains (TMD) form a pore in the membrane and the ATP-binding domain (NBD) is responsible for energy generation. This is Mycobactin import ATP-binding/permease protein IrtA from Mycolicibacterium thermoresistibile (strain ATCC 19527 / DSM 44167 / CIP 105390 / JCM 6362 / NCTC 10409 / 316) (Mycobacterium thermoresistibile).